We begin with the raw amino-acid sequence, 74 residues long: ATP synthase subunit c (74 aa).

A run of 2 helical transmembrane segments spans residues Phe8–Ile28 and Ile52–Ile72.

The protein belongs to the ATPase C chain family. F-type ATPases have 2 components, F(1) - the catalytic core - and F(0) - the membrane proton channel. F(1) has five subunits: alpha(3), beta(3), gamma(1), delta(1), epsilon(1). F(0) has three main subunits: a(1), b(2) and c(10-14). The alpha and beta chains form an alternating ring which encloses part of the gamma chain. F(1) is attached to F(0) by a central stalk formed by the gamma and epsilon chains, while a peripheral stalk is formed by the delta and b chains.

It is found in the cell inner membrane. In terms of biological role, f(1)F(0) ATP synthase produces ATP from ADP in the presence of a proton or sodium gradient. F-type ATPases consist of two structural domains, F(1) containing the extramembraneous catalytic core and F(0) containing the membrane proton channel, linked together by a central stalk and a peripheral stalk. During catalysis, ATP synthesis in the catalytic domain of F(1) is coupled via a rotary mechanism of the central stalk subunits to proton translocation. Functionally, key component of the F(0) channel; it plays a direct role in translocation across the membrane. A homomeric c-ring of between 10-14 subunits forms the central stalk rotor element with the F(1) delta and epsilon subunits. In Rickettsia bellii (strain RML369-C), this protein is ATP synthase subunit c.